Reading from the N-terminus, the 328-residue chain is Spermatogenesis- and oogenesis-specific basic helix-loop-helix-containing protein 1 (328 aa).

Positions 53–104 (SCLRRNVISERERRKRMSLSCERLRALLPQFDGRREDMASVLEMSVQFLRLA) constitute a bHLH domain. Positions 290 to 328 (EAGSALGSDVDDGTSFLLTAGPSSWPGEWGPGFRAGPPA) are disordered. Low complexity predominate over residues 310–321 (GPSSWPGEWGPG).

Forms both hetero- and homodimers with SOHLH2.

Its subcellular location is the cytoplasm. The protein localises to the nucleus. In terms of biological role, transcription regulator of both male and female germline differentiation. Suppresses genes involved in spermatogonial stem cells maintenance, and induces genes important for spermatogonial differentiation. Coordinates oocyte differentiation without affecting meiosis I. This chain is Spermatogenesis- and oogenesis-specific basic helix-loop-helix-containing protein 1 (SOHLH1), found in Homo sapiens (Human).